Consider the following 84-residue polypeptide: Putative membrane protein insertion efficiency factor (84 aa).

The interval 63 to 84 is disordered; it reads WGGSGYDPVPGADPEHDRRPRG. Residues 75–84 are compositionally biased toward basic and acidic residues; that stretch reads DPEHDRRPRG.

Belongs to the UPF0161 family.

It is found in the cell inner membrane. Its function is as follows. Could be involved in insertion of integral membrane proteins into the membrane. The chain is Putative membrane protein insertion efficiency factor from Cereibacter sphaeroides (strain ATCC 17025 / ATH 2.4.3) (Rhodobacter sphaeroides).